The sequence spans 57 residues: Potassium channel toxin alpha-KTx 26.1 (57 aa).

A signal peptide spans 1 to 22; that stretch reads MSRLFVFILIALFLSAIIDVMS. Intrachain disulfides connect Cys30-Cys48, Cys34-Cys53, and Cys38-Cys55.

Belongs to the short scorpion toxin superfamily. Potassium channel inhibitor family. Alpha-KTx 26 subfamily. In terms of tissue distribution, expressed by the venom gland.

It localises to the secreted. Functionally, recombinant toxin that reversibly inhibits the potassium current of mKv1.3/KCNA3 channel stably expressed in COS7 cells (IC(50)=150 nM). Also shows a weak inhibition on Kv1.2/KCNA2, Kv1.3/KCNA3 and TRPV1 channels. This chain is Potassium channel toxin alpha-KTx 26.1, found in Olivierus martensii (Manchurian scorpion).